Here is a 642-residue protein sequence, read N- to C-terminus: Chaperone protein DnaK (642 aa).

Position 200 is a phosphothreonine; by autocatalysis (T200). A compositionally biased stretch (low complexity) spans Q608–Q618. The segment at Q608 to Q642 is disordered.

Belongs to the heat shock protein 70 family.

In terms of biological role, acts as a chaperone. The polypeptide is Chaperone protein DnaK (Laribacter hongkongensis (strain HLHK9)).